A 52-amino-acid polypeptide reads, in one-letter code: Light-harvesting protein B-870 alpha chain (52 aa).

The Cytoplasmic segment spans residues 1–15; the sequence is MAKFYKIWLIFDPRR. A helical transmembrane segment spans residues 16-36; it reads VFVAQGVFLFLLAAMIHLVVL. Residue H32 coordinates a bacteriochlorophyll. Residues 37–52 lie on the Periplasmic side of the membrane; it reads SSGLNWFEAAAAVGGQ.

Belongs to the antenna complex alpha subunit family. As to quaternary structure, the core complex is formed by different alpha and beta chains, binding bacteriochlorophyll molecules, and arranged most probably in tetrameric structures disposed around the reaction center. The non-pigmented gamma chains may constitute additional components.

It localises to the cell inner membrane. Functionally, antenna complexes are light-harvesting systems, which transfer the excitation energy to the reaction centers. This chain is Light-harvesting protein B-870 alpha chain (pufA), found in Roseobacter denitrificans (strain ATCC 33942 / OCh 114) (Erythrobacter sp. (strain OCh 114)).